The sequence spans 93 residues: Putative transmembrane protein ORF25 (93 aa).

Transmembrane regions (helical) follow at residues 1–21 (MAGIHVVLGLFEGALFTNVNA), 22–42 (FLVLMIILSGLIGLFSGYASI), and 60–80 (LWIFNSMLYIIMTIVFVVMSL).

It is found in the host membrane. This is Putative transmembrane protein ORF25 from His1 virus (isolate Australia/Victoria) (His1V).